The primary structure comprises 122 residues: MAEEIEVEETEDFHDMDFNDEEPSCSGGAVQARTERFVVKKWVAHAMWGWDVAVDNCAICRNHIMNLCIECQADPNANQDECTVAWGECNHAFHYHCIARWLKTRLVCPLDNKEWVYQKYGR.

Over residues 1-23 (MAEEIEVEETEDFHDMDFNDEEP) the composition is skewed to acidic residues. The disordered stretch occupies residues 1–28 (MAEEIEVEETEDFHDMDFNDEEPSCSGG). The Zn(2+) site is built by C57, C60, C68, C71, C82, C89, H91, H94, H96, C108, and D111. An RING-type zinc finger spans residues 57 to 112 (CAICRNHIMNLCIECQADPNANQDECTVAWGECNHAFHYHCIARWLKTRLVCPLDN).

This sequence belongs to the RING-box family. As to quaternary structure, part of a SCF complex consisting of Skpa (SKP1), Cul1, Roc1B and a F-box protein. In terms of tissue distribution, highly expressed in early embryos, and in pupae. Widely expressed in adult males, while it is weakly expressed in adult females.

The protein localises to the cytoplasm. It localises to the nucleus. It participates in protein modification; protein ubiquitination. In terms of biological role, component of the SCF (SKP1-CUL1-F-box protein) E3 ubiquitin ligase complex, which mediates the ubiquitination and subsequent proteasomal degradation of target proteins. Through the RING-type zinc finger, seems to recruit the E2 ubiquitination enzyme to the complex and brings it into close proximity to the substrate. The protein is RING-box protein 1B (Roc1b) of Drosophila melanogaster (Fruit fly).